A 124-amino-acid chain; its full sequence is Urease subunit beta (124 aa).

This sequence belongs to the urease beta subunit family. As to quaternary structure, heterotrimer of UreA (gamma), UreB (beta) and UreC (alpha) subunits. Three heterotrimers associate to form the active enzyme.

It is found in the cytoplasm. It catalyses the reaction urea + 2 H2O + H(+) = hydrogencarbonate + 2 NH4(+). Its pathway is nitrogen metabolism; urea degradation; CO(2) and NH(3) from urea (urease route): step 1/1. In Ureaplasma urealyticum serovar 10 (strain ATCC 33699 / Western), this protein is Urease subunit beta.